Here is a 318-residue protein sequence, read N- to C-terminus: MEIKNKKLKETSDVLLSLTYLIKSYEYRDRGNLLESLYYLDKALELNPDFKFAKFLKAISLAILGDINKSIECLEDITSNSNDPVAYALLGQLYELLGNFDNALECYEKSLGIEEKFATAFFLKVLCLGLSGKYDELLKCCDRLISFAPNFIPAYIIKANMLRKLGRYEEALACVNKVLELKENDTNAIYLKALILNRIGNCDEALKYYEKLIDELNVTWIEVIREAIYLSFLFNKLDKAEKYIEMGLKLRPDDASLWYFKGKLYEKQNKFEEALKYYNKAIQLMPHHTKALLAKARVLEKLGRIEESIECYNKALDR.

TPR repeat units lie at residues 17-50 (SLTY…NPDF), 84-117 (PVAY…EEKF), 119-151 (TAFF…APNF), 152-185 (IPAY…KEND), 186-219 (TNAI…LNVT), 221-254 (IEVI…RPDD), 255-288 (ASLW…MPHH), and 289-318 (TKAL…ALDR).

In Methanocaldococcus jannaschii (strain ATCC 43067 / DSM 2661 / JAL-1 / JCM 10045 / NBRC 100440) (Methanococcus jannaschii), this protein is TPR repeat-containing protein MJ0940.